The primary structure comprises 511 residues: ATP synthase subunit alpha 1 (511 aa).

An ATP-binding site is contributed by 170-177 (GDRQTGKT).

This sequence belongs to the ATPase alpha/beta chains family. F-type ATPases have 2 components, CF(1) - the catalytic core - and CF(0) - the membrane proton channel. CF(1) has five subunits: alpha(3), beta(3), gamma(1), delta(1), epsilon(1). CF(0) has three main subunits: a(1), b(2) and c(9-12). The alpha and beta chains form an alternating ring which encloses part of the gamma chain. CF(1) is attached to CF(0) by a central stalk formed by the gamma and epsilon chains, while a peripheral stalk is formed by the delta and b chains.

The protein localises to the cell inner membrane. The catalysed reaction is ATP + H2O + 4 H(+)(in) = ADP + phosphate + 5 H(+)(out). Produces ATP from ADP in the presence of a proton gradient across the membrane. The alpha chain is a regulatory subunit. The protein is ATP synthase subunit alpha 1 of Gluconobacter oxydans (strain 621H) (Gluconobacter suboxydans).